The following is a 1938-amino-acid chain: Myosin-6 (1938 aa).

In terms of domain architecture, Myosin N-terminal SH3-like spans 31 to 80; the sequence is DIRTECFVPDDKEEYVKAKIVSREGGKVTAETENGKTVTVKEDQVMQQNP. Residues 84–779 enclose the Myosin motor domain; sequence DKIEDMAMLT…LLGLLEEMRD (696 aa). Residue Lys-128 is modified to N6,N6,N6-trimethyllysine. 177 to 184 is an ATP binding site; that stretch reads GESGAGKT. A Phosphothreonine modification is found at Thr-378. The residue at position 416 (Ser-416) is a Phosphoserine. Actin-binding regions lie at residues 656–678 and 758–772; these read LNKLMTNLRTTHPHFVRCIIPNE and KFGHTKVFFKAGLLG. The IQ domain occupies 782 to 811; sequence LSRIITRIQAQARGQLMRIEFKKMVERRDA. Calmodulin-binding regions lie at residues 789–806 and 815–832; these read IQAQARGQLMRIEFKKMV and IQWNIRAFMGVKNWPWMK. Positions 842–1938 form a coiled coil; the sequence is KSAETEKEMA…GAKQKMHDEE (1097 aa). A phosphoserine mark is found at Ser-1089 and Ser-1138. Position 1260 is a phosphotyrosine (Tyr-1260). Ser-1270 carries the phosphoserine modification. Phosphothreonine is present on residues Thr-1276 and Thr-1283. At Ser-1308 the chain carries Phosphoserine. At Tyr-1309 the chain carries Phosphotyrosine. A Phosphothreonine modification is found at Thr-1310. A Phosphoserine modification is found at Ser-1511. A phosphothreonine mark is found at Thr-1514 and Thr-1680. Residues 1907–1938 are disordered; that stretch reads AEERADIAESQVNKLRAKSRDIGAKQKMHDEE. A compositionally biased stretch (basic and acidic residues) spans 1924-1938; that stretch reads KSRDIGAKQKMHDEE.

This sequence belongs to the TRAFAC class myosin-kinesin ATPase superfamily. Myosin family. Muscle myosin is a hexameric protein that consists of 2 heavy chain subunits (MHC), 2 alkali light chain subunits (MLC) and 2 regulatory light chain subunits (MLC-2).

The protein resides in the cytoplasm. Its subcellular location is the myofibril. Muscle contraction. The sequence is that of Myosin-6 (Myh6) from Rattus norvegicus (Rat).